The following is a 750-amino-acid chain: Circadian input-output histidine kinase CikA (750 aa).

Residues 1–173 form an N-terminal domain region; the sequence is MLPAFSPIFR…QVIAQIRQSL (173 aa). A GAF domain region spans residues 174–333; it reads DLSEILNNAV…KNFLGQIGEH (160 aa). A Histidine kinase domain is found at 385-609; sequence NISHELRTPL…IFTTVIPQQN (225 aa). Residue H388 is modified to Phosphohistidine; by autocatalysis. Residues 604–750 are psR domain, bind KaiB(fs); that stretch reads VIPQQNFPPT…VQSIQQEPLR (147 aa). Positions 631–745 constitute a Response regulatory domain; it reads SVIVIEQDEE…LLLQRVQSIQ (115 aa). 4-aspartylphosphate is present on D680.

In the N-terminal section; belongs to the phytochrome family. In terms of assembly, homodimer. Part of the circadian clock (KaiA, KaiB, KaiC, CikA, RpaA, SasA), the composition of which varies during the circadian cycle. KaiA and CikA compete for binding to KaiB(fs). Interacts with RpaA.

The enzyme catalyses ATP + protein L-histidine = ADP + protein N-phospho-L-histidine.. Functionally, functions in an input pathway to the Kai circadian clock. Senses oxidized quinones via its C-terminal pseudo-receiver domain, providing a link between cell metabolism and the clock. Affects the ratio of phosphorylated to unphosphorylated KaiC, binds quinones via its pseudo-receptor domain. Quinone-binding destabilizes the protein rapidly. Autophosphorylates, does not transfer the phosphate to its pseudo-receiver (PsR) domain. May play a role in cell division. Also functions in a two-component CikA/RpaA output pathway from the circadian clock, negatively regulating kaiBC expression independently of labA and of sasA. One of three clock output pathways. Dephosphorylates phospho-RpaA, enhanced by KaiB and KaiC, has only modest kinase activity on RpaA. This is Circadian input-output histidine kinase CikA from Synechocystis sp. (strain ATCC 27184 / PCC 6803 / Kazusa).